We begin with the raw amino-acid sequence, 152 residues long: Ribonuclease H (152 aa).

One can recognise an RNase H type-1 domain in the interval 1 to 142; that stretch reads MGSKVVIYTD…ADKLAVQGRE (142 aa). Mg(2+) is bound by residues Asp10, Glu48, Asp70, and Asp134.

Belongs to the RNase H family. Monomer. Requires Mg(2+) as cofactor.

Its subcellular location is the cytoplasm. The catalysed reaction is Endonucleolytic cleavage to 5'-phosphomonoester.. Endonuclease that specifically degrades the RNA of RNA-DNA hybrids. The protein is Ribonuclease H of Rickettsia massiliae (strain Mtu5).